The chain runs to 306 residues: Tryptophan 2,3-dioxygenase (306 aa).

Substrate-binding positions include 75-79, Tyr137, and Arg141; that span reads FIIQH. Heme is bound at residue His264. Thr278 is a binding site for substrate.

The protein belongs to the tryptophan 2,3-dioxygenase family. In terms of assembly, homotetramer. Requires heme as cofactor.

It carries out the reaction L-tryptophan + O2 = N-formyl-L-kynurenine. It participates in amino-acid degradation; L-tryptophan degradation via kynurenine pathway; L-kynurenine from L-tryptophan: step 1/2. Its function is as follows. Heme-dependent dioxygenase that catalyzes the oxidative cleavage of the L-tryptophan (L-Trp) pyrrole ring and converts L-tryptophan to N-formyl-L-kynurenine. Catalyzes the oxidative cleavage of the indole moiety. The protein is Tryptophan 2,3-dioxygenase of Paraburkholderia phytofirmans (strain DSM 17436 / LMG 22146 / PsJN) (Burkholderia phytofirmans).